The primary structure comprises 307 residues: Serine/threonine-protein phosphatase PP2A-3 catalytic subunit (307 aa).

Positions 55, 57, 83, and 115 each coordinate Mn(2+). Histidine 116 acts as the Proton donor in catalysis. Residues histidine 165 and histidine 239 each contribute to the Mn(2+) site.

This sequence belongs to the PPP phosphatase family. PP-2A subfamily. The cofactor is Mn(2+).

The protein localises to the cytoplasm. The enzyme catalyses O-phospho-L-seryl-[protein] + H2O = L-seryl-[protein] + phosphate. The catalysed reaction is O-phospho-L-threonyl-[protein] + H2O = L-threonyl-[protein] + phosphate. The chain is Serine/threonine-protein phosphatase PP2A-3 catalytic subunit (PP2A3) from Oryza sativa subsp. indica (Rice).